The primary structure comprises 320 residues: Cytochrome f (320 aa).

Residues 1–35 (MQTRNTFSWIREEITRSISVSLIIYIITRASISSA) form the signal peptide. Heme is bound by residues Y36, C56, C59, and H60. A helical transmembrane segment spans residues 286–306 (VQGLLFFLASVVLAQIFLVLK).

Belongs to the cytochrome f family. As to quaternary structure, the 4 large subunits of the cytochrome b6-f complex are cytochrome b6, subunit IV (17 kDa polypeptide, petD), cytochrome f and the Rieske protein, while the 4 small subunits are PetG, PetL, PetM and PetN. The complex functions as a dimer. Requires heme as cofactor.

The protein resides in the plastid. Its subcellular location is the chloroplast thylakoid membrane. In terms of biological role, component of the cytochrome b6-f complex, which mediates electron transfer between photosystem II (PSII) and photosystem I (PSI), cyclic electron flow around PSI, and state transitions. This is Cytochrome f from Draba nemorosa (Woodland whitlowgrass).